The sequence spans 515 residues: Probable multifunctional siroheme biosynthesis protein HemA (515 aa).

Residues 26–27 (SL) and 47–48 (IR) contribute to the NAD(+) site. The interval 26–174 (SLDYKSAAID…TAAKKAKTEI (149 aa)) is glutamyl-tRNA reductase. Residues 68–71 (TCNR), Ser-127, Glu-132, and Gln-138 contribute to the L-glutamyl-tRNA(Glu) site. The Nucleophile role is filled by Cys-69. 206 to 211 (GNGEIG) lines the NADP(+) pocket. A precorrin-2 dehydrogenase /sirohydrochlorin ferrochelatase region spans residues 367–507 (FPLFIDLSGK…SLVKSVAEQI (141 aa)).

It in the N-terminal section; belongs to the glutamyl-tRNA reductase family. This sequence in the C-terminal section; belongs to the precorrin-2 dehydrogenase / sirohydrochlorin ferrochelatase family. Homodimer.

It catalyses the reaction (S)-4-amino-5-oxopentanoate + tRNA(Glu) + NADP(+) = L-glutamyl-tRNA(Glu) + NADPH + H(+). The enzyme catalyses precorrin-2 + NAD(+) = sirohydrochlorin + NADH + 2 H(+). It carries out the reaction siroheme + 2 H(+) = sirohydrochlorin + Fe(2+). It participates in cofactor biosynthesis; adenosylcobalamin biosynthesis; sirohydrochlorin from precorrin-2: step 1/1. It functions in the pathway porphyrin-containing compound metabolism; siroheme biosynthesis; siroheme from sirohydrochlorin: step 1/1. Its pathway is porphyrin-containing compound metabolism; siroheme biosynthesis; sirohydrochlorin from precorrin-2: step 1/1. The protein operates within porphyrin-containing compound metabolism; protoporphyrin-IX biosynthesis; 5-aminolevulinate from L-glutamyl-tRNA(Glu): step 1/2. Its function is as follows. Multifunctional enzyme that catalyzes the NADPH-dependent reduction of glutamyl-tRNA(Glu) to glutamate 1-semialdehyde (GSA), the NAD-dependent ring dehydrogenation of precorrin-2 to sirohydrochlorin and finally, the ferrochelation of sirohydrochlorin to yield siroheme. The chain is Probable multifunctional siroheme biosynthesis protein HemA from Ruminiclostridium josui (Clostridium josui).